The sequence spans 571 residues: Alpha-1D adrenergic receptor (571 aa).

The Extracellular portion of the chain corresponds to 1–94 (MTFRDLLSVN…AVGGLVVSAQ (94 aa)). Positions 13-75 (GSRSDGSAGG…SSAGEPGAAG (63 aa)) are disordered. Positions 19 to 34 (SAGGASAGGSGGGSGG) are enriched in gly residues. Low complexity predominate over residues 35 to 47 (AAASEGRAVDGVP). Positions 48 to 57 (GTAGSGGVVG) are enriched in gly residues. N-linked (GlcNAc...) asparagine glycans are attached at residues Asn64 and Asn81. Residues 95-120 (GVGVGVFLAAFILMAVAGNLLVILSV) traverse the membrane as a helical segment. Topologically, residues 121-132 (ACNRHLQTVTNY) are cytoplasmic. The chain crosses the membrane as a helical span at residues 133–158 (FIVNLAVADLLLSATVLPFSATMEVL). The Extracellular segment spans residues 159–168 (GFWAFGRAFC). Residues 169–191 (DVWAAVDVLCCTASILSLCTISV) traverse the membrane as a helical segment. Topologically, residues 192-212 (DRYVGVRHSLKYPSIMTERKA) are cytoplasmic. A helical transmembrane segment spans residues 213–237 (AAILALLWAVAIVVSVGPLLGWKEP). Residues 238-250 (VPPDERFCGITEE) lie on the Extracellular side of the membrane. The chain crosses the membrane as a helical span at residues 251-274 (AGYAVFSSLCSFYLPMAVIVVMYC). The Cytoplasmic segment spans residues 275 to 348 (RVYVVARSTT…KFSREKKAAK (74 aa)). A helical membrane pass occupies residues 349-373 (TLAIVVGVFVLCWFPFFFVLPLGSL). Topologically, residues 374–380 (FPQLKPS) are extracellular. The helical transmembrane segment at 381–405 (EGVFKVIFWLGYFNSCVNPLIYPCS) threads the bilayer. At 406–571 (SREFKRAFLR…DYSHLRETDI (166 aa)) the chain is on the cytoplasmic side. The S-palmitoyl cysteine moiety is linked to residue Cys419. Residues 465-487 (LPAPEATDTPSAPEAQAPVVGRR) form a disordered region.

It belongs to the G-protein coupled receptor 1 family. Adrenergic receptor subfamily. ADRA1D sub-subfamily. In terms of assembly, interacts with FLNA (via filamin repeat 21); increases PKA-mediated phosphorylation of FLNA. Palmitoylated. Palmitoylation by ZDHHC21 may increase the expression of the receptor and regulate downstream signaling.

The protein localises to the cell membrane. Functionally, this alpha-adrenergic receptor mediates its effect through the influx of extracellular calcium. The polypeptide is Alpha-1D adrenergic receptor (ADRA1D) (Sus scrofa (Pig)).